The sequence spans 530 residues: Alpha-(1,3)-fucosyltransferase 4 (530 aa).

2 disordered regions span residues 1–48 and 66–112; these read MRRL…RAVP and HLGG…STPA. Over 1–147 the chain is Cytoplasmic; sequence MRRLWGAARK…GGRRGWRRGR (147 aa). Basic and acidic residues predominate over residues 88–106; sequence ASGERQRRLEPQLQHESRC. The chain crosses the membrane as a helical; Signal-anchor for type II membrane protein span at residues 148–172; it reads GLPWTVCVLAAAGLTCTALITYACW. The Lumenal portion of the chain corresponds to 173–530; the sequence is GQLPPLPWAS…IRNLASWFER (358 aa). 2 N-linked (GlcNAc...) asparagine glycosylation sites follow: N216 and N315.

This sequence belongs to the glycosyltransferase 10 family. Expressed at low levels in bone marrow-derived mesenchymal stem cells. In terms of tissue distribution, expressed in cord blood immature promyelocytes and in peripheral blood myeloid and lymphoid cell populations.

It localises to the golgi apparatus. It is found in the golgi stack membrane. It catalyses the reaction a beta-D-galactosyl-(1-&gt;4)-N-acetyl-beta-D-glucosaminyl derivative + GDP-beta-L-fucose = a beta-D-galactosyl-(1-&gt;4)-[alpha-L-fucosyl-(1-&gt;3)]-N-acetyl-beta-D-glucosaminyl derivative + GDP + H(+). The catalysed reaction is an N-acetyl-alpha-neuraminyl-(2-&gt;3)-beta-D-galactosyl-(1-&gt;4)-N-acetyl-beta-D-glucosaminyl derivative + GDP-beta-L-fucose = an alpha-Neu5Ac-(2-&gt;3)-beta-D-Gal-(1-&gt;4)-[alpha-L-Fuc-(1-&gt;3)]-beta-D-GlcNAc derivative + GDP + H(+). It carries out the reaction an alpha-Neu5Ac-(2-&gt;3)-beta-D-Gal-(1-&gt;4)-beta-D-GlcNAc-(1-&gt;3)-beta-D-Gal-(1-&gt;4)-beta-D-GlcNAc derivative + GDP-beta-L-fucose = an alpha-Neu5Ac-(2-&gt;3)-beta-D-Gal-(1-&gt;4)-beta-D-GlcNAc-(1-&gt;3)-beta-D-Gal-(1-&gt;4)-[alpha-L-Fuc-(1-&gt;3)]-beta-D-GlcNAc derivative + GDP + H(+). The enzyme catalyses an alpha-Neu5Ac-(2-&gt;3)-beta-D-Gal-(1-&gt;4)-beta-D-GlcNAc6S derivative + GDP-beta-L-fucose = an alpha-Neu5Ac-(2-&gt;3)-beta-D-Gal-(1-&gt;4)-[alpha-L-Fuc-(1-&gt;3)]-beta-D-GlcNAc6S derivative + GDP + H(+). Its pathway is protein modification; protein glycosylation. Functionally, catalyzes alpha(1-&gt;3) linkage of fucosyl moiety transferred from GDP-beta-L-fucose to N-acetyl glucosamine (GlcNAc) within type 2 lactosamine (LacNAc, Gal-beta(1-&gt;4)GlcNAc) glycan attached to N- or O-linked glycoproteins. Robustly fucosylates nonsialylated distal LacNAc unit of the polylactosamine chain to form Lewis X antigen (CD15), a glycan determinant known to mediate important cellular functions in development and immunity. Fucosylates with lower efficiency sialylated LacNAc acceptors to form sialyl Lewis X and 6-sulfo sialyl Lewis X determinants that serve as recognition epitopes for C-type lectins. Together with FUT7 contributes to SELE, SELL and SELP selectin ligand biosynthesis and selectin-dependent lymphocyte homing, leukocyte migration and blood leukocyte homeostasis. In a cell type specific manner, may also fucosylate the internal LacNAc unit of the polylactosamine chain to form VIM-2 antigen that serves as recognition epitope for SELE. Its function is as follows. Does not generate Lewis X antigens. In Homo sapiens (Human), this protein is Alpha-(1,3)-fucosyltransferase 4.